A 689-amino-acid chain; its full sequence is Transcription factor MYC2 (689 aa).

The tract at residues 94–172 is JAZ-interaction domain; the sequence is LQQRLQALID…VLRELNSLIS (79 aa). Positions 316 to 349 are enriched in polar residues; that stretch reads NTVQTNSVPSSNSNKQIAYGNENNHPSGNGQSCY. Disordered stretches follow at residues 316 to 361 and 420 to 519; these read NTVQ…PQQQ and QSQF…EAER. The span at 350–361 shows a compositional bias: low complexity; the sequence is NQQQQKNPPQQQ. The span at 471–495 shows a compositional bias: basic and acidic residues; the sequence is DSEHSDLEASVVKEADSSRVVEPEK. Residues 496 to 505 are compositionally biased toward basic residues; the sequence is RPRKRGRKPA. Residues 506–519 show a composition bias toward basic and acidic residues; that stretch reads NGREEPLNHVEAER. The tract at residues 509-522 is basic motif; degenerate; that stretch reads EEPLNHVEAERQRR. One can recognise a bHLH domain in the interval 509–558; that stretch reads EEPLNHVEAERQRREKLNQRFYALRAVVPNVSKMDKASLLGDAISYINEL. A helix-loop-helix motif region spans residues 523-558; it reads EKLNQRFYALRAVVPNVSKMDKASLLGDAISYINEL. A disordered region spans residues 563 to 602; that stretch reads QNTESDKEDLKSQIEDLKKESRRPGPPPPPNQDLKMSSHT. Over residues 566–585 the composition is skewed to basic and acidic residues; the sequence is ESDKEDLKSQIEDLKKESRR.

Interacts (via N-terminus) with MED25. Interacts (via N-terminus) with JAZ7. MED25 and JAZ7 compete with each other to bind to MYC2. Interacts (via N-terminus) with MTB1. MTB1 and MED25 compete with each other to bind to MYC2. As to expression, expressed at low levels in roots, stems, leaves, flowers and fruits.

It localises to the nucleus. Transcriptional activator that binds to the G-box motif (5'-AACGTG-3') found in the promoter of the jasmonate-induced gene LAPA1. Acts as a negative regulator of blue light-mediated photomorphogenesis and positively regulates root growth. Promotes growth in response to the phytohormones abscisic acid (ABA) and jasmonate (JA). Binds to the G-box motif (5'-CACGTG-3') of the RBCS-3A gene promoter. Acts downstream of the jasmonate (JA) receptor to orchestrate JA-mediated activation of plant responses. Positively regulates both wound-responsive and pathogen-responsive genes through MYC2-targeted transcription factors (MTFs) involved in early response to JA. With JA2L forms a transcription module that regulates wounding-responsive genes. With ERF.C3 forms a transcription module that regulates pathogen-responsive genes. Plays a critical role in orchestrating JA-mediated defense gene expression during Botrytis cinerea infection. Negatively regulates defense responses to root-knot nematodes, potentially by mediating crosstalk among the hormones strigolactones, abscisic acid (ABA) and jasmonate (JA). Regulates the termination of JA-mediated defense responses by specifically binding the G-box (5'-CACATG-3') motifs in the promoters of MTB1, MTB2 and MTB3, which are transcription factors that negatively regulates JA signaling. May be involved in JA-induced chilling tolerance, possibly by ameliorating the antioxidant enzyme system of fruit and increasing proline and lycopene levels. This Solanum lycopersicum (Tomato) protein is Transcription factor MYC2.